The primary structure comprises 117 residues: MTRAKSGKISKKRHKKILKLAKGYRGRANNCFRVAIEKVEKGLQYAYRDRRNRKRDFRGLWIQRINAAVREHGLIYSQFMGALKKAGINIDRKVLAELAVNNNDGFASIVQQSKAHI.

The protein belongs to the bacterial ribosomal protein bL20 family.

Functionally, binds directly to 23S ribosomal RNA and is necessary for the in vitro assembly process of the 50S ribosomal subunit. It is not involved in the protein synthesizing functions of that subunit. This is Large ribosomal subunit protein bL20 (rplT) from Rickettsia prowazekii (strain Madrid E).